Reading from the N-terminus, the 351-residue chain is Phosphoribosylformylglycinamidine cyclo-ligase (351 aa).

This sequence belongs to the AIR synthase family.

It is found in the cytoplasm. It catalyses the reaction 2-formamido-N(1)-(5-O-phospho-beta-D-ribosyl)acetamidine + ATP = 5-amino-1-(5-phospho-beta-D-ribosyl)imidazole + ADP + phosphate + H(+). Its pathway is purine metabolism; IMP biosynthesis via de novo pathway; 5-amino-1-(5-phospho-D-ribosyl)imidazole from N(2)-formyl-N(1)-(5-phospho-D-ribosyl)glycinamide: step 2/2. The sequence is that of Phosphoribosylformylglycinamidine cyclo-ligase from Oleidesulfovibrio alaskensis (strain ATCC BAA-1058 / DSM 17464 / G20) (Desulfovibrio alaskensis).